The chain runs to 1323 residues: Inositol hexakisphosphate and diphosphoinositol-pentakisphosphate kinase (1323 aa).

A substrate-binding site is contributed by R26 to K27. Residues R109, K162, H169, R188, E212 to I215, and D221 to K223 contribute to the ATP site. Residue R188–K189 coordinates substrate. Substrate contacts are provided by K223 and R237. Residues D284 and D296–N298 contribute to the ATP site. Residue S301–K304 participates in substrate binding. Residues T355–I426 form a polyphosphoinositide-binding domain region. Composition is skewed to polar residues over residues F933–S947 and V977–L992. Disordered stretches follow at residues F933–D1022, A1043–K1107, and I1134–R1155. The span at S993 to T1006 shows a compositional bias: low complexity. The segment covering K1062 to W1074 has biased composition (basic and acidic residues). The span at S1090 to E1101 shows a compositional bias: low complexity.

The protein belongs to the histidine acid phosphatase family. VIP1 subfamily.

The protein localises to the cytoplasm. The protein resides in the cytosol. The catalysed reaction is 1D-myo-inositol hexakisphosphate + ATP = 1-diphospho-1D-myo-inositol 2,3,4,5,6-pentakisphosphate + ADP. The enzyme catalyses 5-diphospho-1D-myo-inositol 1,2,3,4,6-pentakisphosphate + ATP + H(+) = 1,5-bis(diphospho)-1D-myo-inositol 2,3,4,6-tetrakisphosphate + ADP. In terms of biological role, bifunctional inositol kinase that acts in concert with the IP6K kinases to synthesize the diphosphate group-containing inositol pyrophosphates diphosphoinositol pentakisphosphate, PP-InsP5, and bis-diphosphoinositol tetrakisphosphate, (PP)2-InsP4. PP-InsP5 and (PP)2-InsP4, also respectively called InsP7 and InsP8, may regulate a variety of cellular processes, including apoptosis, vesicle trafficking, cytoskeletal dynamics, and exocytosis. Phosphorylates inositol hexakisphosphate (InsP6) at position 1 to produce PP-InsP5 which is in turn phosphorylated by IP6Ks to produce (PP)2-InsP4. Alternatively, phosphorylates PP-InsP5 at position 1, produced by IP6Ks from InsP6, to produce (PP)2-InsP4. This Caenorhabditis elegans protein is Inositol hexakisphosphate and diphosphoinositol-pentakisphosphate kinase.